Consider the following 498-residue polypeptide: ATP synthase subunit beta, chloroplastic (498 aa).

An ATP-binding site is contributed by 172-179; that stretch reads GGAGVGKT.

This sequence belongs to the ATPase alpha/beta chains family. In terms of assembly, F-type ATPases have 2 components, CF(1) - the catalytic core - and CF(0) - the membrane proton channel. CF(1) has five subunits: alpha(3), beta(3), gamma(1), delta(1), epsilon(1). CF(0) has four main subunits: a(1), b(1), b'(1) and c(9-12).

The protein resides in the plastid. It localises to the chloroplast thylakoid membrane. It carries out the reaction ATP + H2O + 4 H(+)(in) = ADP + phosphate + 5 H(+)(out). Produces ATP from ADP in the presence of a proton gradient across the membrane. The catalytic sites are hosted primarily by the beta subunits. In Oenothera biennis (German evening primrose), this protein is ATP synthase subunit beta, chloroplastic.